A 280-amino-acid chain; its full sequence is UPF0494 membrane protein C750.06c (280 aa).

Helical transmembrane passes span 107 to 127, 144 to 164, 178 to 198, and 199 to 219; these read WPLL…KFEV, IWVP…SLIF, VIIA…GMII, and AALG…LYFG.

This sequence belongs to the UPF0494 family.

The protein resides in the cytoplasm. Its subcellular location is the vacuole. It localises to the membrane. This is UPF0494 membrane protein C750.06c from Schizosaccharomyces pombe (strain 972 / ATCC 24843) (Fission yeast).